Here is a 201-residue protein sequence, read N- to C-terminus: dITP/XTP pyrophosphatase (201 aa).

A substrate-binding site is contributed by 7–12; it reads SNNAHK. Residue aspartate 72 is the Proton acceptor of the active site. Residue aspartate 72 participates in Mg(2+) binding. Residues serine 73, 154–157, lysine 177, and 182–183 each bind substrate; these read FGYD and HR.

This sequence belongs to the HAM1 NTPase family. Homodimer. The cofactor is Mg(2+).

It carries out the reaction XTP + H2O = XMP + diphosphate + H(+). It catalyses the reaction dITP + H2O = dIMP + diphosphate + H(+). The enzyme catalyses ITP + H2O = IMP + diphosphate + H(+). Functionally, pyrophosphatase that catalyzes the hydrolysis of nucleoside triphosphates to their monophosphate derivatives, with a high preference for the non-canonical purine nucleotides XTP (xanthosine triphosphate), dITP (deoxyinosine triphosphate) and ITP. Seems to function as a house-cleaning enzyme that removes non-canonical purine nucleotides from the nucleotide pool, thus preventing their incorporation into DNA/RNA and avoiding chromosomal lesions. The sequence is that of dITP/XTP pyrophosphatase from Leuconostoc mesenteroides subsp. mesenteroides (strain ATCC 8293 / DSM 20343 / BCRC 11652 / CCM 1803 / JCM 6124 / NCDO 523 / NBRC 100496 / NCIMB 8023 / NCTC 12954 / NRRL B-1118 / 37Y).